The primary structure comprises 636 residues: Threonine--tRNA ligase (636 aa).

Positions 1-63 constitute a TGS domain; it reads MNEINVTLPD…ADGARVEIVT (63 aa). Residues 243-534 form a catalytic region; the sequence is DHRKLGRELD…LIEHFAGNFP (292 aa). Residues C335, H386, and H511 each contribute to the Zn(2+) site.

It belongs to the class-II aminoacyl-tRNA synthetase family. Homodimer. It depends on Zn(2+) as a cofactor.

It localises to the cytoplasm. It catalyses the reaction tRNA(Thr) + L-threonine + ATP = L-threonyl-tRNA(Thr) + AMP + diphosphate + H(+). Catalyzes the attachment of threonine to tRNA(Thr) in a two-step reaction: L-threonine is first activated by ATP to form Thr-AMP and then transferred to the acceptor end of tRNA(Thr). Also edits incorrectly charged L-seryl-tRNA(Thr). The protein is Threonine--tRNA ligase of Geobacter sp. (strain M21).